Here is a 64-residue protein sequence, read N- to C-terminus: Large ribosomal subunit protein uL29 (64 aa).

The protein belongs to the universal ribosomal protein uL29 family.

This chain is Large ribosomal subunit protein uL29, found in Verminephrobacter eiseniae (strain EF01-2).